The sequence spans 664 residues: MLTSILIKGRTPVLASRNLLAALSNCNHITWAVSRRLYNDGNRDQRNFGRNQRNNNSNRYRNSRFNSRPRTRSREDDDEVHFDKTTFSKLIHVPKEDNSKEVTLDSLLEEGVLDKEIHKAITRMEFPGLTPVQQKTIKPILSSEDHDVIARAKTGTGKTFAFLIPIFQHLINTKFDSQYMVKAVIVAPTRDLALQIEAEVKKIHDMNYGLKKYACVSLVGGTDFRAAMNKMNKLRPNIVIATPGRLIDVLEKYSNKFFRFVDYKVLDEADRLLEIGFRDDLETISGILNEKNSKSADNIKTLLFSATLDDKVQKLANNIMNKKECLFLDTVDKNEPEAHERIDQSVVISEKFANSIFAAVEHIKKQIKERDSNYKAIIFAPTVKFTSFLCSILKNEFKKDLPILEFHGKITQNKRTSLVKRFKKDESGILVCTDVGARGMDFPNVHEVLQIGVPSELANYIHRIGRTARSGKEGSSVLFICKDELPFVRELEDAKNIVIAKQEKYEPSEEIKSEVLEAVTEEPEDISDIVISLISSYRSCIKEYRFSERRILPEIASTYGVLLNDPQLKIPVSRRFLDKLGLSRSPIGKAMFEIRDYSSRDGNNKSYDYDDDSEISFRGNKNYNNRSQNRDYDDEPFRRSNNNRRSFSRSNDKNNYSSRNSNIY.

A mitochondrion-targeting transit peptide spans Met1–Cys26. A disordered region spans residues Asn42 to Glu79. Residues Phe48 to Arg68 show a composition bias toward low complexity. Positions Ser106–Gln134 match the Q motif motif. Residues Pro139 to Leu326 enclose the Helicase ATP-binding domain. Ala152–Thr159 provides a ligand contact to ATP. A DEAD box motif is present at residues Asp267 to Asp270. Positions Ser355 to Lys512 constitute a Helicase C-terminal domain. Residues Gly602–Tyr664 are disordered. Basic and acidic residues predominate over residues Gln628–Arg638. Positions Arg639 to Arg649 are enriched in low complexity. Polar residues predominate over residues Lys653–Tyr664.

It belongs to the DEAD box helicase family. DDX18/HAS1 subfamily.

Its subcellular location is the mitochondrion matrix. The enzyme catalyses ATP + H2O = ADP + phosphate + H(+). In terms of biological role, ATP-dependent RNA helicase required for mitochondrial splicing of group I and II introns. Specifically involved in the ATP-dependent splicing of the bl1 intron of COB. Also required for efficient mitochondrial translation. The polypeptide is ATP-dependent RNA helicase MSS116, mitochondrial (MSS116) (Saccharomyces cerevisiae (strain ATCC 204508 / S288c) (Baker's yeast)).